Consider the following 185-residue polypeptide: Ribosome-recycling factor (185 aa).

It belongs to the RRF family.

It localises to the cytoplasm. Responsible for the release of ribosomes from messenger RNA at the termination of protein biosynthesis. May increase the efficiency of translation by recycling ribosomes from one round of translation to another. This is Ribosome-recycling factor from Desulfosudis oleivorans (strain DSM 6200 / JCM 39069 / Hxd3) (Desulfococcus oleovorans).